The sequence spans 427 residues: Interleukin-13 receptor subunit alpha-1 (427 aa).

A signal peptide spans 1 to 21 (MEWPARLCGLWALLLCAGGGG). Residues 22-343 (GGGGAAPTET…MSIGKKRNST (322 aa)) lie on the Extracellular side of the membrane. Fibronectin type-III domains follow at residues 34–123 (PVTN…PPEG), 128–226 (AVTE…TSRV), and 227–339 (KPDP…IGKK). 2 N-linked (GlcNAc...) asparagine glycosylation sites follow: N37 and N61. 3 cysteine pairs are disulfide-bonded: C62-C102, C95-C117, and C134-C144. N-linked (GlcNAc...) asparagine glycans are attached at residues N105, N138, and N157. Residues C173 and C185 are joined by a disulfide bond. 5 N-linked (GlcNAc...) asparagine glycosylation sites follow: N235, N265, N293, N329, and N341. 2 disulfides stabilise this stretch: C257–C320 and C282–C296. The WSXWS motif signature appears at 327–331 (WSNWS). The helical transmembrane segment at 344-367 (LYITMLLIVPVIVAGAIIVLLLYL) threads the bilayer. Topologically, residues 368 to 427 (KRLKIIIFPPIPDPGKIFKEMFGDQNDDTLHWKKYDIYEKQTKEETDSVVLIENLKKASQ) are cytoplasmic. Positions 374-382 (IFPPIPDPG) match the Box 1 motif motif.

This sequence belongs to the type I cytokine receptor family. Type 5 subfamily. As to quaternary structure, interleukin-13 receptor is a complex of IL4R, IL13RA1, and possibly other components. Interacts with TRAF3IP1. Interacts with IL4. Ubiquitous. Highest levels in heart, liver, skeletal muscle and ovary; lowest levels in brain, lung and kidney. Also found in B-cells, T-cells and endothelial cells.

It localises to the membrane. Binds with low affinity to interleukin-13 (IL13). Together with IL4RA can form a functional receptor for IL13. Also serves as an alternate accessory protein to the common cytokine receptor gamma chain for interleukin-4 (IL4) signaling, but cannot replace the function of IL2RG in allowing enhanced interleukin-2 (IL2) binding activity. The sequence is that of Interleukin-13 receptor subunit alpha-1 (IL13RA1) from Homo sapiens (Human).